The following is a 514-amino-acid chain: 2,3-bisphosphoglycerate-independent phosphoglycerate mutase (514 aa).

Asp-14 and Ser-64 together coordinate Mn(2+). Catalysis depends on Ser-64, which acts as the Phosphoserine intermediate. Residues His-125, 155 to 156, Arg-187, Arg-193, 263 to 266, and Lys-336 each bind substrate; these read RD and RADR. Residues Asp-403, His-407, Asp-444, His-445, and His-463 each contribute to the Mn(2+) site.

The protein belongs to the BPG-independent phosphoglycerate mutase family. In terms of assembly, monomer. It depends on Mn(2+) as a cofactor.

The enzyme catalyses (2R)-2-phosphoglycerate = (2R)-3-phosphoglycerate. It participates in carbohydrate degradation; glycolysis; pyruvate from D-glyceraldehyde 3-phosphate: step 3/5. Functionally, catalyzes the interconversion of 2-phosphoglycerate and 3-phosphoglycerate. This Shewanella pealeana (strain ATCC 700345 / ANG-SQ1) protein is 2,3-bisphosphoglycerate-independent phosphoglycerate mutase.